The primary structure comprises 200 residues: MTSKIFSPKISAVIESLRKLPTIGKKSSQRLALYLLDKSPETAIAIANSLLDATANIKKCVYCQALTEDDVCNICSNTNRDDTKLCIIESMLDMIAIEEAGIYRGKYFVLNGRISPLDGIGPSELKLDILQQIIADRKIDEVILAISPTVEGETTAHFISQMIAKDIKISRIGFGVPFGGELEYLDQQTLLHAFNTRTNI.

A C4-type zinc finger spans residues 60 to 75 (CVYCQALTEDDVCNIC). Positions 83–177 (TKLCIIESML…KISRIGFGVP (95 aa)) constitute a Toprim domain.

It belongs to the RecR family.

May play a role in DNA repair. It seems to be involved in an RecBC-independent recombinational process of DNA repair. It may act with RecF and RecO. The protein is Recombination protein RecR of Francisella tularensis subsp. holarctica (strain OSU18).